We begin with the raw amino-acid sequence, 248 residues long: 2,3-bisphosphoglycerate-dependent phosphoglycerate mutase (248 aa).

Residues Arg8–Asn15, Thr21–Gly22, Arg60, Glu87–Tyr90, Lys98, Arg114–Arg115, and Gly183–Asn184 contribute to the substrate site. Residue His9 is the Tele-phosphohistidine intermediate of the active site. Glu87 serves as the catalytic Proton donor/acceptor.

Belongs to the phosphoglycerate mutase family. BPG-dependent PGAM subfamily. In terms of assembly, homodimer.

It carries out the reaction (2R)-2-phosphoglycerate = (2R)-3-phosphoglycerate. Its pathway is carbohydrate degradation; glycolysis; pyruvate from D-glyceraldehyde 3-phosphate: step 3/5. Catalyzes the interconversion of 2-phosphoglycerate and 3-phosphoglycerate. The sequence is that of 2,3-bisphosphoglycerate-dependent phosphoglycerate mutase from Teredinibacter turnerae (strain ATCC 39867 / T7901).